Here is a 239-residue protein sequence, read N- to C-terminus: Lysophospholipase-like protein 1 (239 aa).

Residue Ala2 is modified to N-acetylalanine. Active-site charge relay system residues include Ser125, Asp180, and His212.

The protein belongs to the AB hydrolase superfamily. AB hydrolase 2 family.

It localises to the cytoplasm. The protein localises to the cytosol. It catalyses the reaction S-hexadecanoyl-L-cysteinyl-[protein] + H2O = L-cysteinyl-[protein] + hexadecanoate + H(+). In terms of biological role, palmitoyl thioesterase that catalyzes depalmitoylation of CGAS and KCNMA1. Acts as a regulator of innate immunity by mediating depalmitoylation of CGAS, thereby preventing CGAS homodimerization and cyclic GMP-AMP synthase activity. Does not exhibit phospholipase nor triacylglycerol lipase activity, able to hydrolyze only short chain substrates due to its shallow active site. This Mus musculus (Mouse) protein is Lysophospholipase-like protein 1.